The following is a 449-amino-acid chain: MAICSFFLQGRCRYGEKCWNEHPRGGSSRYQSQNRYQEPPGNAKGTWGSSSQRYVQPSSFSRSTTWVNRDNEKPSSGSHSGFDNRNVKFTAATGFPSSQNRFAALSSQDNSRDAQTDKGNIIDDITNDMEIWESSGQWMFSVYSMLREKKNISGFADFSPEELRLEYYACQAEGNPLKYINAVQQLGSKWKQRILELKNLNPSSKMALFNELSSPSSDMTSGYNGQQKPAFGSSSFPTNNTAPTAATFSFKADAANAAKAGATNSLAGSNVPAFGNKPTSAPSFGSGGAATAASFSFAPSSSSNFGATTSTSGFGNASNTASFQGTANSAAAPAFGVASSSTAATGFGGGFSTTGAMNTGVRDLFSAGTVGPGPVTSLFVQTTGPLHATASSTSLDGQSFRPSALNTTNSLFTPQNELSAEELAQFKAQRFTLGKIPLKPPPADLLNVS.

The C3H1-type zinc finger occupies 1–25; that stretch reads MAICSFFLQGRCRYGEKCWNEHPRG. Disordered regions lie at residues 22-84 and 218-237; these read HPRG…GFDN and DMTS…SSFP. Polar residues-rich tracts occupy residues 47–83 and 218–227; these read WGSS…SGFD and DMTSGYNGQQ. FG repeat units follow at residues 231-232, 274-275, 284-285, 305-306, 314-315, 335-336, and 347-348; these read FG.

Probable component of the nuclear pore complex (NPC).

The protein localises to the nucleus. The protein resides in the nuclear pore complex. It is found in the nucleus membrane. Its function is as follows. Required for the export of mRNAs containing poly(A) tails from the nucleus into the cytoplasm. This chain is Nucleoporin NUP42 (nup42), found in Xenopus tropicalis (Western clawed frog).